A 129-amino-acid polypeptide reads, in one-letter code: Follitropin subunit beta (129 aa).

The first 18 residues, 1–18 (MKSVQFCFLFCCWRATCC), serve as a signal peptide directing secretion. 6 disulfide bridges follow: cysteine 21/cysteine 69, cysteine 35/cysteine 84, cysteine 38/cysteine 122, cysteine 46/cysteine 100, cysteine 50/cysteine 102, and cysteine 105/cysteine 112. Asparagine 25 and asparagine 42 each carry an N-linked (GlcNAc...) asparagine glycan.

The protein belongs to the glycoprotein hormones subunit beta family. In terms of assembly, heterodimer. The active follitropin is a heterodimer composed of an alpha chain/CGA shared with other hormones and a unique beta chain/FSHB shown here.

It localises to the secreted. Its function is as follows. Together with the alpha chain CGA constitutes follitropin, the follicle-stimulating hormone, and provides its biological specificity to the hormone heterodimer. Binds FSHR, a G protein-coupled receptor, on target cells to activate downstream signaling pathways. Follitropin is involved in follicle development and spermatogenesis in reproductive organs. The polypeptide is Follitropin subunit beta (FSHB) (Cervus nippon (Sika deer)).